The chain runs to 137 residues: MALKYLLDTSVIKRLSRPAVRRAVEPLAEAGAVARTQITDLEVGYSARNETEWQRLMVALSAFDLIESTASHHRRALGIQRLLAARSQRGRKIPDLLIAAAGEEHGLVVLHYDADFDLIAAVTGQPCQWIVPAGTID.

A PINc domain is found at 5 to 120 (YLLDTSVIKR…HYDADFDLIA (116 aa)). Residues aspartate 8 and aspartate 95 each coordinate Mg(2+).

This sequence belongs to the PINc/VapC protein family. It depends on Mg(2+) as a cofactor.

Toxic component of a type II toxin-antitoxin (TA) system. An RNase. Its cognate antitoxin is VapB51. The protein is Ribonuclease VapC51 of Mycobacterium tuberculosis (strain ATCC 25618 / H37Rv).